A 478-amino-acid chain; its full sequence is Cytochrome c-552 (478 aa).

The signal sequence occupies residues 1–26 (MTRIKINARRIFSLLIPFFFFTSVHA). H94 is a binding site for heme c. Residues C122, C125, and K126 each contribute to the heme site. Heme c contacts are provided by C160, C163, H164, C209, C212, and H213. Ca(2+)-binding residues include E215, Y216, K261, and Q263. Y216 lines the substrate pocket. A substrate-binding site is contributed by H264. Heme c is bound by residues H275, C282, C285, H286, H301, C314, C317, H318, and H393.

It belongs to the cytochrome c-552 family. The cofactor is Ca(2+). Requires heme c as cofactor.

Its subcellular location is the periplasm. The catalysed reaction is 6 Fe(III)-[cytochrome c] + NH4(+) + 2 H2O = 6 Fe(II)-[cytochrome c] + nitrite + 8 H(+). The protein operates within nitrogen metabolism; nitrate reduction (assimilation). Its function is as follows. Catalyzes the reduction of nitrite to ammonia, consuming six electrons in the process. This Escherichia coli O9:H4 (strain HS) protein is Cytochrome c-552.